A 972-amino-acid chain; its full sequence is Leucine--tRNA ligase (972 aa).

A 'HIGH' region motif is present at residues 78 to 89; the sequence is PYPSGDGLHVGH. Residues 741 to 745 carry the 'KMSKS' region motif; it reads KIGKS. K744 serves as a coordination point for ATP.

This sequence belongs to the class-I aminoacyl-tRNA synthetase family.

Its subcellular location is the cytoplasm. The enzyme catalyses tRNA(Leu) + L-leucine + ATP = L-leucyl-tRNA(Leu) + AMP + diphosphate. The protein is Leucine--tRNA ligase of Mycobacterium leprae (strain Br4923).